The sequence spans 375 residues: Protein RIC-3 (375 aa).

The first 29 residues, 1–29, serve as a signal peptide directing secretion; the sequence is MALSAVQKVVLFSCLVLCVSLLLPRAYIA. Residues 30–90 are Lumenal-facing; the sequence is RGKPAAQEGN…GGGGGTRPSL (61 aa). Polar residues predominate over residues 38-47; it reads GNTGLFQSSG. The disordered stretch occupies residues 38-63; sequence GNTGLFQSSGHHPKPTDGRPGGAHFP. A helical transmembrane segment spans residues 91–111; sequence VGQIIPIYGFGILLYILYILF. Residues 112-375 lie on the Cytoplasmic side of the membrane; sequence KLSSKGKSTK…RKRNTKGIEY (264 aa). Residues 135–165 adopt a coiled-coil conformation; sequence KRKITDYELSQLQDKLKETEEAMEKIISRLG. The disordered stretch occupies residues 251–375; it reads SAEQVAEQMG…RKRNTKGIEY (125 aa). Polar residues predominate over residues 286 to 296; it reads GDQQAQGTISA. A compositionally biased stretch (acidic residues) spans 305 to 319; sequence EDIEEDEDEDEDPEV. Residues 365-375 show a composition bias toward basic residues; the sequence is LRKRNTKGIEY.

The protein belongs to the ric-3 family.

The protein resides in the endoplasmic reticulum membrane. Molecular chaperone which facilitates proper subunit assembly andsurface trafficking of alpha-7 (CHRNA7) and alpha-8 (CHRNA8) nicotinic acetylcholine receptors. May also promote functional expression of homomeric serotoninergic 5-HT3 receptors, and of heteromeric acetylcholine receptors. The polypeptide is Protein RIC-3 (ric3) (Xenopus tropicalis (Western clawed frog)).